A 267-amino-acid polypeptide reads, in one-letter code: Cell division protein FtsQ (267 aa).

At 1-32 (MRKKTSSNKKKQTKKTNNISLRRKLRLIYKKA) the chain is on the cytoplasmic side. Residues 33–53 (ILGLKIALIIFVCLFVFTKYF) traverse the membrane as a helical segment. The Periplasmic segment spans residues 54 to 267 (AGIKTYLTTN…DKNKYYIEKY (214 aa)). The POTRA domain occupies 73–141 (FKLENVIIEG…NTVYIKLFER (69 aa)).

The protein belongs to the FtsQ/DivIB family. FtsQ subfamily.

It localises to the cell inner membrane. In terms of biological role, essential cell division protein. This is Cell division protein FtsQ from Rickettsia felis (strain ATCC VR-1525 / URRWXCal2) (Rickettsia azadi).